The primary structure comprises 301 residues: Ribonuclease Z (301 aa).

7 residues coordinate Zn(2+): His-60, His-62, Asp-64, His-65, His-137, Asp-207, and His-265. Asp-64 (proton acceptor) is an active-site residue.

This sequence belongs to the RNase Z family. Homodimer. Requires Zn(2+) as cofactor.

It catalyses the reaction Endonucleolytic cleavage of RNA, removing extra 3' nucleotides from tRNA precursor, generating 3' termini of tRNAs. A 3'-hydroxy group is left at the tRNA terminus and a 5'-phosphoryl group is left at the trailer molecule.. Its function is as follows. Zinc phosphodiesterase, which displays some tRNA 3'-processing endonuclease activity. Probably involved in tRNA maturation, by removing a 3'-trailer from precursor tRNA. In Exiguobacterium sp. (strain ATCC BAA-1283 / AT1b), this protein is Ribonuclease Z.